A 186-amino-acid chain; its full sequence is Superoxide dismutase [Cu-Zn] (186 aa).

Residues 1–20 form the signal peptide; sequence MKKTVLALMFSCGMVASAFA. Cu cation contacts are provided by His-79, His-81, and His-104. Cys-86 and Cys-182 are oxidised to a cystine. His-104, His-113, His-122, and Asp-125 together coordinate Zn(2+). His-160 lines the Cu cation pocket.

Belongs to the Cu-Zn superoxide dismutase family. Homodimer. Cu cation is required as a cofactor. Zn(2+) serves as cofactor.

It localises to the periplasm. The enzyme catalyses 2 superoxide + 2 H(+) = H2O2 + O2. Functionally, destroys radicals which are normally produced within the cells and which are toxic to biological systems. This chain is Superoxide dismutase [Cu-Zn] (sodC), found in Pasteurella multocida (strain Pm70).